Here is a 63-residue protein sequence, read N- to C-terminus: Small ribosomal subunit protein bS21 (63 aa).

The protein belongs to the bacterial ribosomal protein bS21 family.

The polypeptide is Small ribosomal subunit protein bS21 (Porphyromonas gingivalis (strain ATCC BAA-308 / W83)).